Consider the following 611-residue polypeptide: UvrABC system protein C (611 aa).

Positions Asn6–Val84 constitute a GIY-YIG domain. One can recognise a UVR domain in the interval Gln194–Val229.

This sequence belongs to the UvrC family. As to quaternary structure, interacts with UvrB in an incision complex.

Its subcellular location is the cytoplasm. Functionally, the UvrABC repair system catalyzes the recognition and processing of DNA lesions. UvrC both incises the 5' and 3' sides of the lesion. The N-terminal half is responsible for the 3' incision and the C-terminal half is responsible for the 5' incision. The polypeptide is UvrABC system protein C (Brucella suis biovar 1 (strain 1330)).